The following is a 179-amino-acid chain: Large ribosomal subunit protein uL6 (179 aa).

The protein belongs to the universal ribosomal protein uL6 family. Part of the 50S ribosomal subunit.

Functionally, this protein binds to the 23S rRNA, and is important in its secondary structure. It is located near the subunit interface in the base of the L7/L12 stalk, and near the tRNA binding site of the peptidyltransferase center. The polypeptide is Large ribosomal subunit protein uL6 (Koribacter versatilis (strain Ellin345)).